Consider the following 252-residue polypeptide: Ribosomal RNA small subunit methyltransferase A (252 aa).

The S-adenosyl-L-methionine site is built by N11, L13, G38, E60, D82, and N99.

It belongs to the class I-like SAM-binding methyltransferase superfamily. rRNA adenine N(6)-methyltransferase family. RsmA subfamily.

The protein localises to the cytoplasm. The enzyme catalyses adenosine(1518)/adenosine(1519) in 16S rRNA + 4 S-adenosyl-L-methionine = N(6)-dimethyladenosine(1518)/N(6)-dimethyladenosine(1519) in 16S rRNA + 4 S-adenosyl-L-homocysteine + 4 H(+). Specifically dimethylates two adjacent adenosines (A1518 and A1519) in the loop of a conserved hairpin near the 3'-end of 16S rRNA in the 30S particle. May play a critical role in biogenesis of 30S subunits. The sequence is that of Ribosomal RNA small subunit methyltransferase A from Hydrogenobaculum sp. (strain Y04AAS1).